A 430-amino-acid chain; its full sequence is F-box protein At1g49990 (430 aa).

The 45-residue stretch at 1–45 folds into the F-box domain; sequence METGRRRTIPEVEILARLPLRSIARFKSVCKRWKSVIESDYFRRL.

The protein is F-box protein At1g49990 of Arabidopsis thaliana (Mouse-ear cress).